A 319-amino-acid polypeptide reads, in one-letter code: uncharacterized protein (319 aa).

The next 9 helical transmembrane spans lie at 11–31, 43–63, 83–103, 108–128, 134–154, 195–215, 220–240, 260–280, and 284–304; these read GLWA…LGVF, ALGW…GVWW, LSVD…IPAL, VLFW…FAGV, FHWL…KLFL, LATP…LFAL, AIFA…FAIL, KVGL…IDFV, and PEVS…ASLI.

The protein belongs to the TerC family.

The protein localises to the cell membrane. This is an uncharacterized protein from Myxococcus xanthus.